A 290-amino-acid polypeptide reads, in one-letter code: 33 kDa chaperonin (290 aa).

2 disulfide bridges follow: Cys235/Cys237 and Cys268/Cys271.

Belongs to the HSP33 family. Post-translationally, under oxidizing conditions two disulfide bonds are formed involving the reactive cysteines. Under reducing conditions zinc is bound to the reactive cysteines and the protein is inactive.

It is found in the cytoplasm. In terms of biological role, redox regulated molecular chaperone. Protects both thermally unfolding and oxidatively damaged proteins from irreversible aggregation. Plays an important role in the bacterial defense system toward oxidative stress. This chain is 33 kDa chaperonin, found in Streptococcus sanguinis (strain SK36).